The sequence spans 562 residues: Protein wntless (562 aa).

The Cytoplasmic portion of the chain corresponds to 1–13 (MSGTILENLSGRK). Residues 14 to 34 (LSILVATLLLCQVLCFLLGGL) traverse the membrane as a helical segment. Residues 35 to 239 (YAPLPAGHVT…AIHQNGGFTQ (205 aa)) lie on the Lumenal side of the membrane. N-linked (GlcNAc...) asparagine glycosylation is present at Asn-58. The helical transmembrane segment at 240 to 260 (IWLLLKTMLFPFVVGIMIWFW) threads the bilayer. The Cytoplasmic segment spans residues 261–270 (RRVHLLQRSP). The chain crosses the membrane as a helical span at residues 271-291 (ALLEYMLIYLGAALTFLNLPL). Residues 292 to 311 (EYLSLVYEMPYMLLLSDIRQ) lie on the Lumenal side of the membrane. The helical transmembrane segment at 312–332 (GIFYAMLLTFWLVFAGEHMLI) threads the bilayer. The Cytoplasmic segment spans residues 333–344 (QDAPNKSTIRSR). A helical transmembrane segment spans residues 345–365 (YWKHLSAVVVGCISLFVFDIC). The Lumenal portion of the chain corresponds to 366–390 (ERGVQLRNPFYSIWTTPLGAKVAMT). A helical membrane pass occupies residues 391–411 (FIVLAGVSAAIYFLFLCYMIW). Residues 412-441 (KVFRNIGDKRTSLPSMSQARRLHYEGLIYR) lie on the Cytoplasmic side of the membrane. A helical membrane pass occupies residues 442 to 462 (FKFLMLATLVCAALTVAGFIM). Residues 463–482 (GQMAEGQWDWNDNVAIQPTS) are Lumenal-facing. A helical transmembrane segment spans residues 483 to 503 (AFLTGVYGMWNIYIFALLILY). The Cytoplasmic portion of the chain corresponds to 504 to 562 (APSHKQWPAMHHSDETTQSNENIVASAASEEIEFSHLPSDSNPSEISSLTSFTRKVAFD).

This sequence belongs to the wntless family. In terms of assembly, interacts with wg; in the Golgi. Interacts with Vps35, a component of the retromer complex; wls stability is regulated by Vps35.

The protein localises to the presynaptic cell membrane. It localises to the postsynaptic cell membrane. Its subcellular location is the cell membrane. The protein resides in the endoplasmic reticulum membrane. It is found in the endosome membrane. The protein localises to the golgi apparatus membrane. Its function is as follows. A segment polarity gene required for wingless (wg)-dependent patterning processes, acting in both wg-sending cells and wg-target cells. In non-neuronal cells wls directs wg secretion. The wls traffic loop encompasses the Golgi, the cell surface, an endocytic compartment and a retrograde route leading back to the Golgi, and involves clathrin-mediated endocytosis and the retromer complex (a conserved protein complex consisting of Vps35 and Vps26). In neuronal cells (the larval motorneuron NMJ), the wg signal moves across the synapse via the release of wls-containing exosome-like vesicles. Postsynaptic wls is required for the trafficking of fz2 through the fz2-interacting protein Grip. The polypeptide is Protein wntless (Drosophila sechellia (Fruit fly)).